Here is an 855-residue protein sequence, read N- to C-terminus: Endochitinase 2 (855 aa).

Positions Met-1 to Ala-22 are cleaved as a signal peptide. One can recognise a GH18 domain in the interval Ser-29 to Cys-340. Asn-90 carries an N-linked (GlcNAc...) asparagine glycan. The active-site Proton donor is Glu-175. The interval Asp-341–Arg-672 is disordered. Over residues Thr-346–Ser-400 the composition is skewed to low complexity. Residues Ile-401–Pro-456 show a composition bias toward polar residues. Low complexity predominate over residues Ser-457 to Thr-483. Over residues Lys-484–Gly-521 the composition is skewed to polar residues. Positions Ser-522–Ser-533 are enriched in low complexity. The segment covering Ala-534–Pro-555 has biased composition (polar residues). The segment covering Thr-556–Ser-567 has biased composition (low complexity). The span at Met-568–Gly-641 shows a compositional bias: polar residues. Low complexity-rich tracts occupy residues Thr-642–Thr-652 and Thr-659–Arg-672. Residue Gly-826 is the site of GPI-anchor amidated glycine attachment. The propeptide at Ser-827–Leu-855 is removed in mature form.

It belongs to the glycosyl hydrolase 18 family. Chitinase class III subfamily.

The protein resides in the cell membrane. It catalyses the reaction Random endo-hydrolysis of N-acetyl-beta-D-glucosaminide (1-&gt;4)-beta-linkages in chitin and chitodextrins.. Functionally, may be associated with endosporulation. This is Endochitinase 2 (CTS2) from Coccidioides posadasii (strain C735) (Valley fever fungus).